The primary structure comprises 301 residues: Acetylglutamate kinase (301 aa).

Residues 72–73 (GG), R94, and N199 each bind substrate.

This sequence belongs to the acetylglutamate kinase family. ArgB subfamily.

The protein localises to the cytoplasm. The enzyme catalyses N-acetyl-L-glutamate + ATP = N-acetyl-L-glutamyl 5-phosphate + ADP. It participates in amino-acid biosynthesis; L-arginine biosynthesis; N(2)-acetyl-L-ornithine from L-glutamate: step 2/4. Its function is as follows. Catalyzes the ATP-dependent phosphorylation of N-acetyl-L-glutamate. This is Acetylglutamate kinase from Bartonella quintana (strain Toulouse) (Rochalimaea quintana).